A 257-amino-acid polypeptide reads, in one-letter code: Ig delta chain C region secreted form (257 aa).

The region spanning Pro5–Thr105 is the Ig-like 1 domain. Cys26 and Cys78 form a disulfide bridge. 2 N-linked (GlcNAc...) asparagine glycosylation sites follow: Asn58 and Asn75. The segment at Pro89–Lys111 is disordered. Positions Trp96 to Lys111 are enriched in polar residues. 3 N-linked (GlcNAc...) asparagine glycosylation sites follow: Asn112, Asn135, and Asn227. An Ig-like 2 domain is found at Pro133 to Ala233.

In terms of tissue distribution, cell lines producing IgD contain several mRNA species for Ig delta chains. In plasmacytomas, the secreted form is the major component, and the membrane-bound form is a minor component. In spleen, however, the membrane-bound form is the major component. These two forms differ in their C-terminal segments.

The protein localises to the secreted. This chain is Ig delta chain C region secreted form, found in Mus musculus (Mouse).